Reading from the N-terminus, the 487-residue chain is UDP-N-acetylmuramoyl-L-alanyl-D-glutamate--2,6-diaminopimelate ligase (487 aa).

Positions 23 and 25 each coordinate UDP-N-acetyl-alpha-D-muramoyl-L-alanyl-D-glutamate. 108-114 contributes to the ATP binding site; it reads GTNGKTS. Residues 150 to 151, Ser-177, Gln-183, and Arg-185 each bind UDP-N-acetyl-alpha-D-muramoyl-L-alanyl-D-glutamate; that span reads TT. Lys-217 carries the post-translational modification N6-carboxylysine. Meso-2,6-diaminopimelate is bound by residues Arg-378, 402 to 405, Gly-453, and Glu-457; that span reads DNPR. The Meso-diaminopimelate recognition motif motif lies at 402 to 405; sequence DNPR.

Belongs to the MurCDEF family. MurE subfamily. The cofactor is Mg(2+). Carboxylation is probably crucial for Mg(2+) binding and, consequently, for the gamma-phosphate positioning of ATP.

The protein resides in the cytoplasm. The enzyme catalyses UDP-N-acetyl-alpha-D-muramoyl-L-alanyl-D-glutamate + meso-2,6-diaminopimelate + ATP = UDP-N-acetyl-alpha-D-muramoyl-L-alanyl-gamma-D-glutamyl-meso-2,6-diaminopimelate + ADP + phosphate + H(+). The protein operates within cell wall biogenesis; peptidoglycan biosynthesis. In terms of biological role, catalyzes the addition of meso-diaminopimelic acid to the nucleotide precursor UDP-N-acetylmuramoyl-L-alanyl-D-glutamate (UMAG) in the biosynthesis of bacterial cell-wall peptidoglycan. The sequence is that of UDP-N-acetylmuramoyl-L-alanyl-D-glutamate--2,6-diaminopimelate ligase from Pseudomonas syringae pv. tomato (strain ATCC BAA-871 / DC3000).